Reading from the N-terminus, the 386-residue chain is S-adenosylmethionine synthase (386 aa).

Histidine 16 lines the ATP pocket. Mg(2+) is bound at residue aspartate 18. Glutamate 44 is a binding site for K(+). L-methionine contacts are provided by glutamate 57 and glutamine 100. The interval 100 to 110 (QSGDIAMGVDE) is flexible loop. Residues 165-167 (DAK), aspartate 240, 246-247 (RK), alanine 263, and lysine 267 contribute to the ATP site. Residue aspartate 240 participates in L-methionine binding. Residue lysine 271 participates in L-methionine binding.

This sequence belongs to the AdoMet synthase family. As to quaternary structure, homotetramer; dimer of dimers. Requires Mg(2+) as cofactor. It depends on K(+) as a cofactor.

Its subcellular location is the cytoplasm. It carries out the reaction L-methionine + ATP + H2O = S-adenosyl-L-methionine + phosphate + diphosphate. It participates in amino-acid biosynthesis; S-adenosyl-L-methionine biosynthesis; S-adenosyl-L-methionine from L-methionine: step 1/1. Catalyzes the formation of S-adenosylmethionine (AdoMet) from methionine and ATP. The overall synthetic reaction is composed of two sequential steps, AdoMet formation and the subsequent tripolyphosphate hydrolysis which occurs prior to release of AdoMet from the enzyme. The chain is S-adenosylmethionine synthase from Hahella chejuensis (strain KCTC 2396).